A 168-amino-acid chain; its full sequence is ATP synthase F(1) complex subunit delta, mitochondrial (168 aa).

A mitochondrion-targeting transit peptide spans 1–22 (MLPAALLRHPGLRRLVLQARTY). N6-acetyllysine; alternate occurs at positions 136 and 165. K136 and K165 each carry N6-succinyllysine; alternate.

This sequence belongs to the ATPase epsilon chain family. As to quaternary structure, component of the ATP synthase complex composed at least of ATP5F1A/subunit alpha, ATP5F1B/subunit beta, ATP5MC1/subunit c (homooctomer), MT-ATP6/subunit a, MT-ATP8/subunit 8, ATP5ME/subunit e, ATP5MF/subunit f, ATP5MG/subunit g, ATP5MK/subunit k, ATP5MJ/subunit j, ATP5F1C/subunit gamma, ATP5F1D/subunit delta, ATP5F1E/subunit epsilon, ATP5PF/subunit F6, ATP5PB/subunit b, ATP5PD/subunit d, ATP5PO/subunit OSCP. ATP synthase complex consists of a soluble F(1) head domain (subunits alpha(3) and beta(3)) - the catalytic core - and a membrane F(0) domain - the membrane proton channel (subunits c, a, 8, e, f, g, k and j). These two domains are linked by a central stalk (subunits gamma, delta, and epsilon) rotating inside the F1 region and a stationary peripheral stalk (subunits F6, b, d, and OSCP). Component of a complex composed at least by ATPIF1, ATP5F1A, ATP5F1B, ATP5F1C AND ATP5F1E.

Its subcellular location is the mitochondrion. It localises to the mitochondrion inner membrane. Subunit delta, of the mitochondrial membrane ATP synthase complex (F(1)F(0) ATP synthase or Complex V) that produces ATP from ADP in the presence of a proton gradient across the membrane which is generated by electron transport complexes of the respiratory chain. ATP synthase complex consist of a soluble F(1) head domain - the catalytic core - and a membrane F(1) domain - the membrane proton channel. These two domains are linked by a central stalk rotating inside the F(1) region and a stationary peripheral stalk. During catalysis, ATP synthesis in the catalytic domain of F(1) is coupled via a rotary mechanism of the central stalk subunits to proton translocation. In vivo, can only synthesize ATP although its ATP hydrolase activity can be activated artificially in vitro. With the central stalk subunit gamma, is essential for the biogenesis of F(1) catalytic part of the ATP synthase complex namely in the formation of F1 assembly intermediate. The polypeptide is ATP synthase F(1) complex subunit delta, mitochondrial (Rattus norvegicus (Rat)).